The primary structure comprises 446 residues: Kynurenine 3-monooxygenase (446 aa).

This sequence belongs to the aromatic-ring hydroxylase family. KMO subfamily. FAD serves as cofactor.

It catalyses the reaction L-kynurenine + NADPH + O2 + H(+) = 3-hydroxy-L-kynurenine + NADP(+) + H2O. Its pathway is cofactor biosynthesis; NAD(+) biosynthesis; quinolinate from L-kynurenine: step 1/3. Its function is as follows. Catalyzes the hydroxylation of L-kynurenine (L-Kyn) to form 3-hydroxy-L-kynurenine (L-3OHKyn). Required for synthesis of quinolinic acid. The polypeptide is Kynurenine 3-monooxygenase (Flavobacterium johnsoniae (strain ATCC 17061 / DSM 2064 / JCM 8514 / BCRC 14874 / CCUG 350202 / NBRC 14942 / NCIMB 11054 / UW101) (Cytophaga johnsonae)).